Consider the following 37-residue polypeptide: Cytochrome b6-f complex subunit 5 (37 aa).

The helical transmembrane segment at 5–25 (LPSGIVLGLIPITLAGLFVTA) threads the bilayer.

Belongs to the PetG family. The 4 large subunits of the cytochrome b6-f complex are cytochrome b6, subunit IV (17 kDa polypeptide, PetD), cytochrome f and the Rieske protein, while the 4 small subunits are PetG, PetL, PetM and PetN. The complex functions as a dimer.

It localises to the plastid. Its subcellular location is the chloroplast thylakoid membrane. Functionally, component of the cytochrome b6-f complex, which mediates electron transfer between photosystem II (PSII) and photosystem I (PSI), cyclic electron flow around PSI, and state transitions. PetG is required for either the stability or assembly of the cytochrome b6-f complex. This chain is Cytochrome b6-f complex subunit 5, found in Pinus thunbergii (Japanese black pine).